We begin with the raw amino-acid sequence, 505 residues long: Ribose import ATP-binding protein RbsA (505 aa).

2 consecutive ABC transporter domains span residues 12–249 (LQMK…VGRK) and 259–504 (VKKG…VAFS). 44-51 (GENGAGKS) contributes to the ATP binding site.

It belongs to the ABC transporter superfamily. Ribose importer (TC 3.A.1.2.1) family. The complex is composed of an ATP-binding protein (RbsA), two transmembrane proteins (RbsC) and a solute-binding protein (RbsB).

Its subcellular location is the cell membrane. The catalysed reaction is D-ribose(out) + ATP + H2O = D-ribose(in) + ADP + phosphate + H(+). Its function is as follows. Part of the ABC transporter complex RbsABC involved in ribose import. Responsible for energy coupling to the transport system. The polypeptide is Ribose import ATP-binding protein RbsA (Clostridium tetani (strain Massachusetts / E88)).